The sequence spans 466 residues: Glycylpeptide N-tetradecanoyltransferase (466 aa).

The interval M1–G21 is disordered. Polar residues predominate over residues N8 to S19. A Phosphoserine modification is found at S17. Residues F51 to W54, L185 to I187, and S193 to T197 contribute to the tetradecanoyl-CoA site. The Proton acceptor; via carboxylate role is filled by I466.

This sequence belongs to the NMT family. As to quaternary structure, monomer.

The protein localises to the cytoplasm. The catalysed reaction is N-terminal glycyl-[protein] + tetradecanoyl-CoA = N-tetradecanoylglycyl-[protein] + CoA + H(+). In terms of biological role, adds a myristoyl group to the N-terminal glycine residue of certain cellular proteins. This is Glycylpeptide N-tetradecanoyltransferase (nmt1) from Schizosaccharomyces pombe (strain 972 / ATCC 24843) (Fission yeast).